A 104-amino-acid polypeptide reads, in one-letter code: Phycoerythrin alpha-2 chain, chloroplastic (104 aa).

Residues 1 to 37 (MSAKIIAFSAVVATASAFAPTAGFVPRLRSGATSVNM) constitute a chloroplast transit peptide. K41 is modified (5-hydroxylysine). Residues C56 and R58 each coordinate 15,16-dihydrobiliverdin. Positions 61 to 63 (KEY) are 15,16-dihydrobiliverdin chromophore. A 15,16-dihydrobiliverdin-binding site is contributed by K78.

This sequence belongs to the phycoerythrin family. In terms of assembly, heterotetramer of 2 different alpha chains and 2 identical beta chains. The subunit composition could comprise of any combination of 2 out of 4 different alpha units with an invariant beta unit. Contains one covalently linked 15,16-dihydrobiliverdin chromophore.

It is found in the plastid. The protein resides in the chloroplast thylakoid membrane. In terms of biological role, light-harvesting photosynthetic tetrapyrrole chromophore-protein from the phycobiliprotein complex. The polypeptide is Phycoerythrin alpha-2 chain, chloroplastic (cpeA2) (Rhodomonas sp. (strain CS 24) (Chroomonas sp. (strain CS24))).